Consider the following 188-residue polypeptide: dCTP deaminase (188 aa).

DCTP-binding positions include 111 to 116 (KSTYAR), 135 to 137 (TLE), Q156, Y170, and Q180. The active-site Proton donor/acceptor is the E137.

This sequence belongs to the dCTP deaminase family. In terms of assembly, homotrimer.

The enzyme catalyses dCTP + H2O + H(+) = dUTP + NH4(+). It functions in the pathway pyrimidine metabolism; dUMP biosynthesis; dUMP from dCTP (dUTP route): step 1/2. In terms of biological role, catalyzes the deamination of dCTP to dUTP. The protein is dCTP deaminase of Pseudomonas fluorescens (strain SBW25).